The sequence spans 733 residues: DNA-binding protein SATB2 (733 aa).

Positions M1–P47 are disordered. S20 carries the phosphoserine modification. Residues K24 and K30 each participate in a glycyl lysine isopeptide (Lys-Gly) (interchain with G-Cter in SUMO2) cross-link. At S39 the chain carries Phosphoserine. The CMP domain maps to G57 to S158. K161 is covalently cross-linked (Glycyl lysine isopeptide (Lys-Gly) (interchain with G-Cter in SUMO2)). The region spanning K161–V234 is the CUTL domain. K233 is covalently cross-linked (Glycyl lysine isopeptide (Lys-Gly) (interchain with G-Cter in SUMO)). A Glycyl lysine isopeptide (Lys-Gly) (interchain with G-Cter in SUMO); alternate cross-link involves residue K350. Residue K350 forms a Glycyl lysine isopeptide (Lys-Gly) (interchain with G-Cter in SUMO2); alternate linkage. Positions K350–R437 form a DNA-binding region, CUT 1. Residues D435–P473 form a disordered region. Positions M441–S458 are enriched in low complexity. A Phosphoserine modification is found at S454. Residues R459–T470 show a composition bias toward polar residues. A Phosphothreonine modification is found at T467. Positions P473–S560 form a DNA-binding region, CUT 2. K475 is covalently cross-linked (Glycyl lysine isopeptide (Lys-Gly) (interchain with G-Cter in SUMO2)). Positions Q580–S593 are enriched in low complexity. Disordered stretches follow at residues Q580 to S617 and L694 to R733. Position 594 is a phosphoserine (S594). Residues P615–G674 constitute a DNA-binding region (homeobox). Residues L694–E708 are compositionally biased toward acidic residues. Residues E709–R733 are compositionally biased toward basic and acidic residues. Residue K724 forms a Glycyl lysine isopeptide (Lys-Gly) (interchain with G-Cter in SUMO2) linkage.

It belongs to the CUT homeobox family. In terms of assembly, interacts with ATF4 and RUNX2; resulting in enhanced DNA binding and transactivation by these transcription factors. Interacts with PIAS1. Post-translationally, sumoylated by PIAS1. Sumoylation promotes nuclear localization, but represses transcription factor activity. As to expression, high expression in adult brain, moderate expression in fetal brain, and weak expression in adult liver, kidney, and spinal cord and in select brain regions, including amygdala, corpus callosum, caudate nucleus, and hippocampus.

The protein resides in the nucleus matrix. In terms of biological role, binds to DNA, at nuclear matrix- or scaffold-associated regions. Thought to recognize the sugar-phosphate structure of double-stranded DNA. Transcription factor controlling nuclear gene expression, by binding to matrix attachment regions (MARs) of DNA and inducing a local chromatin-loop remodeling. Acts as a docking site for several chromatin remodeling enzymes and also by recruiting corepressors (HDACs) or coactivators (HATs) directly to promoters and enhancers. Required for the initiation of the upper-layer neurons (UL1) specific genetic program and for the inactivation of deep-layer neurons (DL) and UL2 specific genes, probably by modulating BCL11B expression. Repressor of Ctip2 and regulatory determinant of corticocortical connections in the developing cerebral cortex. May play an important role in palate formation. Acts as a molecular node in a transcriptional network regulating skeletal development and osteoblast differentiation. In Homo sapiens (Human), this protein is DNA-binding protein SATB2 (SATB2).